We begin with the raw amino-acid sequence, 158 residues long: Transcription elongation factor GreA (158 aa).

Belongs to the GreA/GreB family.

In terms of biological role, necessary for efficient RNA polymerase transcription elongation past template-encoded arresting sites. The arresting sites in DNA have the property of trapping a certain fraction of elongating RNA polymerases that pass through, resulting in locked ternary complexes. Cleavage of the nascent transcript by cleavage factors such as GreA or GreB allows the resumption of elongation from the new 3'terminus. GreA releases sequences of 2 to 3 nucleotides. This Polaromonas naphthalenivorans (strain CJ2) protein is Transcription elongation factor GreA.